We begin with the raw amino-acid sequence, 194 residues long: Orotate phosphoribosyltransferase (194 aa).

Residues Lys-98 and Glu-122–Ser-130 contribute to the 5-phospho-alpha-D-ribose 1-diphosphate site. Positions 126 and 154 each coordinate orotate.

It belongs to the purine/pyrimidine phosphoribosyltransferase family. PyrE subfamily. In terms of assembly, homodimer. It depends on Mg(2+) as a cofactor.

The catalysed reaction is orotidine 5'-phosphate + diphosphate = orotate + 5-phospho-alpha-D-ribose 1-diphosphate. It functions in the pathway pyrimidine metabolism; UMP biosynthesis via de novo pathway; UMP from orotate: step 1/2. Catalyzes the transfer of a ribosyl phosphate group from 5-phosphoribose 1-diphosphate to orotate, leading to the formation of orotidine monophosphate (OMP). This is Orotate phosphoribosyltransferase from Deinococcus radiodurans (strain ATCC 13939 / DSM 20539 / JCM 16871 / CCUG 27074 / LMG 4051 / NBRC 15346 / NCIMB 9279 / VKM B-1422 / R1).